The following is a 359-amino-acid chain: Peptide chain release factor 1 (359 aa).

An N5-methylglutamine modification is found at Gln235. The disordered stretch occupies residues 283–309 (QKAESERSQARRSQVGSGDRSERIRTY).

It belongs to the prokaryotic/mitochondrial release factor family. In terms of processing, methylated by PrmC. Methylation increases the termination efficiency of RF1.

The protein resides in the cytoplasm. Its function is as follows. Peptide chain release factor 1 directs the termination of translation in response to the peptide chain termination codons UAG and UAA. The sequence is that of Peptide chain release factor 1 from Brucella melitensis biotype 2 (strain ATCC 23457).